Here is a 181-residue protein sequence, read N- to C-terminus: Adenine phosphoribosyltransferase (181 aa).

The protein belongs to the purine/pyrimidine phosphoribosyltransferase family. As to quaternary structure, homodimer.

It is found in the cytoplasm. The catalysed reaction is AMP + diphosphate = 5-phospho-alpha-D-ribose 1-diphosphate + adenine. The protein operates within purine metabolism; AMP biosynthesis via salvage pathway; AMP from adenine: step 1/1. In terms of biological role, catalyzes a salvage reaction resulting in the formation of AMP, that is energically less costly than de novo synthesis. This chain is Adenine phosphoribosyltransferase, found in Vibrio campbellii (strain ATCC BAA-1116).